Reading from the N-terminus, the 495-residue chain is MRINPTTSDPAVSTLEEKNLGRIAQIIGPVLDVVFPPGKMPNIYNALVVKGRDTVGQQINVTCEVQQLLGNNRVRAVAMSATDGLTRGMEVIDTGAALSVPVGGATLGRIFNVLGEPVDNLGPVDTRTTSPIHRSAPAFIQLDTKLSIFETGIKVVDLLAPYRRGGKIGLFGGAGVGKTVLIMELINNIAKAHGGVSVFGGVGERTREGNDLYMEMKESGVINEKNIAESKVALVYGQMNEPPGARMRVGLTALTMAEYIRDVNEQDVLLFIDNIFRFVQAGSEVSALLGRMPSAVGYQPTLSTEMGSLQERITSTKEGSITSIQAVYVPADDLTDPAPATTFAHLDATTVLSRGLAAKGIYPAVDPLDSTSTMLQPRIVGEEHYETAQRVKQTLQRYKELQDIIAILGLDELSEEDRLTVARARKIERFLSQPFFVAEVFTGSPGKYVGLTETIRGFQLILSGELDGLPEQAFYLVGNIDEATAKAMNLEGEKK.

172–179 (GGAGVGKT) is an ATP binding site.

The protein belongs to the ATPase alpha/beta chains family. F-type ATPases have 2 components, CF(1) - the catalytic core - and CF(0) - the membrane proton channel. CF(1) has five subunits: alpha(3), beta(3), gamma(1), delta(1), epsilon(1). CF(0) has four main subunits: a(1), b(1), b'(1) and c(9-12).

Its subcellular location is the plastid. The protein localises to the chloroplast thylakoid membrane. The catalysed reaction is ATP + H2O + 4 H(+)(in) = ADP + phosphate + 5 H(+)(out). In terms of biological role, produces ATP from ADP in the presence of a proton gradient across the membrane. The catalytic sites are hosted primarily by the beta subunits. This chain is ATP synthase subunit beta, chloroplastic, found in Eucomis bicolor (King's flower).